The following is a 248-amino-acid chain: MAGHSQFKNIMHRKGRQDAMRSKIFSKLAREITVAAKQGSPDPAMNPRLRLAVQNAKAQSMPKDNIERAIKKASGSDVENYDEVRYEGYGPGGVAVIVEALTDNRNRTASNIRAAFTKSGGALGETGSVSFMFNRIGEIIYKPEAGTTDNIMDAAIEAGAEDVQSEETGHHIICTFEDIGEVSKMLEAKLGEAESIKTVWKATTLTPVDEEKALSILRLISTLEEDDDVQNVYANFDVSDEILAKLSA.

This sequence belongs to the TACO1 family.

It localises to the cytoplasm. The polypeptide is Probable transcriptional regulatory protein BH14810 (Bartonella henselae (strain ATCC 49882 / DSM 28221 / CCUG 30454 / Houston 1) (Rochalimaea henselae)).